The chain runs to 397 residues: Elongation factor Tu (397 aa).

The tr-type G domain maps to 10 to 206 (KPHVNIGTIG…AVDASIPEPE (197 aa)). The segment at 19-26 (GHIDHGKT) is G1. 19–26 (GHIDHGKT) contributes to the GTP binding site. Mg(2+) is bound at residue Thr26. A G2 region spans residues 62-66 (GITIS). Residues 83–86 (DCPG) form a G3 region. GTP is bound by residues 83-87 (DCPGH) and 138-141 (NKAD). Positions 138–141 (NKAD) are G4. The segment at 176–178 (SAL) is G5.

The protein belongs to the TRAFAC class translation factor GTPase superfamily. Classic translation factor GTPase family. EF-Tu/EF-1A subfamily. In terms of assembly, monomer.

Its subcellular location is the cytoplasm. It catalyses the reaction GTP + H2O = GDP + phosphate + H(+). In terms of biological role, GTP hydrolase that promotes the GTP-dependent binding of aminoacyl-tRNA to the A-site of ribosomes during protein biosynthesis. The polypeptide is Elongation factor Tu (Parafrankia sp. (strain EAN1pec)).